Reading from the N-terminus, the 312-residue chain is 4-hydroxyproline 2-epimerase (312 aa).

The Proton acceptor role is filled by Cys88. Substrate contacts are provided by residues 89–90 (GH), His208, and Asp234. Cys238 (proton donor) is an active-site residue. 239-240 (GT) is a substrate binding site.

The protein belongs to the proline racemase family.

The catalysed reaction is trans-4-hydroxy-L-proline = cis-4-hydroxy-D-proline. In terms of biological role, catalyzes the epimerization of trans-4-hydroxy-L-proline (t4LHyp) to cis-4-hydroxy-D-proline (c4DHyp). Is likely involved in a degradation pathway that converts t4LHyp to alpha-ketoglutarate. Can also catalyze the epimerization of trans-3-hydroxy-L-proline (t3LHyp) to cis-3-hydroxy-D-proline (c3DHyp), albeit with 500-fold lower efficiency. Displays no proline racemase activity. This is 4-hydroxyproline 2-epimerase from Xanthomonas campestris pv. campestris (strain ATCC 33913 / DSM 3586 / NCPPB 528 / LMG 568 / P 25).